Consider the following 601-residue polypeptide: Lanthanide-dependent methanol dehydrogenase (601 aa).

A signal peptide spans 1-21 (MRAVHLLALGAGLAAASPALA). The cysteines at positions 124 and 125 are disulfide-linked. Pyrroloquinoline quinone contacts are provided by Arg130, Thr174, Ser189, Gly190, and Gly191. Glu192 contributes to the La(3+) binding site. A disulfide bond links Cys197 and Cys256. Trp258 provides a ligand contact to pyrroloquinoline quinone. The La(3+) site is built by Asn276, Asp318, and Asp320. Asp318 (proton acceptor) is an active-site residue. Pyrroloquinoline quinone is bound at residue Arg345. A disulfide bridge connects residues Cys408 and Cys437. Pyrroloquinoline quinone contacts are provided by Trp494 and Trp558.

The protein belongs to the bacterial PQQ dehydrogenase family. In terms of assembly, homodimer. Requires La(3+) as cofactor. Nd(3+) serves as cofactor. Pyrroloquinoline quinone is required as a cofactor.

The protein resides in the periplasm. It catalyses the reaction 2 Fe(III)-[cytochrome cL] + methanol = 2 Fe(II)-[cytochrome cL] + formaldehyde + 2 H(+). In terms of biological role, catalyzes the oxidation of methanol to formaldehyde, but only in the presence of lanthanides (Ln). Contributes to methanol metabolism when La(3+) is present in the natural environment of the bacterium, allowing bacterial growth with methanol as carbon and energy source. Thereby is an essential enzyme for Ln-dependent methylotrophy. Uses a specific cytochrome cL (XoxG), encoded by the adjacent gene in the locus, as electron acceptor. Also plays a role in the transcriptional regulation of the mxa and xox1 operons, most likely acting as a lanthanide sensory module. Is also able to oxidize formaldehyde to formate in vitro, but this activity does not occur in vivo. In Methylorubrum extorquens (strain ATCC 14718 / DSM 1338 / JCM 2805 / NCIMB 9133 / AM1) (Methylobacterium extorquens), this protein is Lanthanide-dependent methanol dehydrogenase.